The primary structure comprises 79 residues: Small ribosomal subunit protein uS17 (79 aa).

Belongs to the universal ribosomal protein uS17 family. In terms of assembly, part of the 30S ribosomal subunit.

Its function is as follows. One of the primary rRNA binding proteins, it binds specifically to the 5'-end of 16S ribosomal RNA. The polypeptide is Small ribosomal subunit protein uS17 (Bartonella tribocorum (strain CIP 105476 / IBS 506)).